The sequence spans 129 residues: uncharacterized protein (129 aa).

The VOC domain occupies 6 to 129; that stretch reads QVHHIAIIAT…DGLPLELYEQ (124 aa). Positions 9, 57, 78, and 125 each coordinate a divalent metal cation.

It to B.subtilis YwkD.

This is an uncharacterized protein from Escherichia coli (strain K12).